Reading from the N-terminus, the 432-residue chain is Cytochrome c biogenesis protein CcsB (432 aa).

A run of 3 helical transmembrane segments spans residues Leu-14–Ile-34, Ser-72–Arg-92, and Val-162–Ser-182.

Belongs to the Ccs1/CcsB family. May interact with CcsA.

The protein resides in the cellular thylakoid membrane. Required during biogenesis of c-type cytochromes (cytochrome c6 and cytochrome f) at the step of heme attachment. The protein is Cytochrome c biogenesis protein CcsB of Prochlorococcus marinus (strain MIT 9303).